We begin with the raw amino-acid sequence, 112 residues long: 87 kDa annexin-binding protein (112 aa).

Binds annexin.

The sequence is that of 87 kDa annexin-binding protein from Physarum polycephalum (Slime mold).